The sequence spans 344 residues: Heat-inducible transcription repressor HrcA (344 aa).

This sequence belongs to the HrcA family.

Functionally, negative regulator of class I heat shock genes (grpE-dnaK-dnaJ and groELS operons). Prevents heat-shock induction of these operons. The protein is Heat-inducible transcription repressor HrcA of Streptococcus pneumoniae (strain Taiwan19F-14).